Consider the following 517-residue polypeptide: GMP synthase [glutamine-hydrolyzing] (517 aa).

Residues 9 to 199 (RILILDFGSQ…VLGICGCERL (191 aa)) form the Glutamine amidotransferase type-1 domain. Cysteine 86 functions as the Nucleophile in the catalytic mechanism. Residues histidine 173 and glutamate 175 contribute to the active site. Positions 200–392 (WTSESIIEDA…LGLPYEMLYR (193 aa)) constitute a GMPS ATP-PPase domain. 227–233 (SGGVDSS) lines the ATP pocket.

Homodimer.

The enzyme catalyses XMP + L-glutamine + ATP + H2O = GMP + L-glutamate + AMP + diphosphate + 2 H(+). It functions in the pathway purine metabolism; GMP biosynthesis; GMP from XMP (L-Gln route): step 1/1. Functionally, catalyzes the synthesis of GMP from XMP. The polypeptide is GMP synthase [glutamine-hydrolyzing] (Vibrio vulnificus (strain CMCP6)).